The following is a 343-amino-acid chain: Type II restriction enzyme BsuMI component YdiS (343 aa).

BsuMI restriction activity requires YdiR, YdiS and YdjA.

The enzyme catalyses Endonucleolytic cleavage of DNA to give specific double-stranded fragments with terminal 5'-phosphates.. Its function is as follows. A P subtype restriction enzyme that recognizes the double-stranded sequence 5'-CTCGAG-3'; the cleavage site is unknown. The sequence is that of Type II restriction enzyme BsuMI component YdiS (ydiS) from Bacillus subtilis (strain 168).